The following is a 454-amino-acid chain: Prenyltransferase nscD (454 aa).

This sequence belongs to the tryptophan dimethylallyltransferase family.

The protein operates within secondary metabolite biosynthesis. Functionally, prenyltransferase; part of the gene cluster that mediates the biosynthesis of neosartoricin, a prenylated anthracenone that exhibits T-cell antiproliferative activity, suggestive of a physiological role as an immunosuppressive agent. The non-reducing polyketide synthase nscA probably synthesizes and cyclizes the decaketide backbone. The hydrolase nscB then mediates the product release through hydrolysis followed by spontaneous decarboxylation. The prenyltransferase nscD catalyzes the addition of the dimethylallyl group to the aromatic C5. The FAD-dependent monooxygenase nscC is then responsible for the stereospecific hydroxylation at C2. There is no gene encoding O-acetyltransferase in the nsc gene cluster; thus, the last step of 2-O-acetylation leading to neosartoricin may be catalyzed by an unidentified O-acetyltransferase. This Neosartorya fischeri (strain ATCC 1020 / DSM 3700 / CBS 544.65 / FGSC A1164 / JCM 1740 / NRRL 181 / WB 181) (Aspergillus fischerianus) protein is Prenyltransferase nscD.